The following is a 3096-amino-acid chain: Cilia- and flagella-associated protein 54 (3096 aa).

Low complexity predominate over residues 1–45; the sequence is MAAQGSPSSSPSDDSTTSGSLPELPPTSTATSRSPPESKGSSRSS. 2 disordered regions span residues 1–46 and 1248–1267; these read MAAQ…RSSL and SNEQ…LKTK.

Belongs to the CFAP54 family.

The protein localises to the cytoplasm. Its subcellular location is the cytoskeleton. It is found in the cilium axoneme. In terms of biological role, required for assembly and function of cilia and flagella. This Homo sapiens (Human) protein is Cilia- and flagella-associated protein 54.